A 120-amino-acid chain; its full sequence is NAD(P)H-quinone oxidoreductase subunit 3, chloroplastic (120 aa).

A run of 3 helical transmembrane segments spans residues 9–29, 64–84, and 88–108; these read IFWAFLIISSVIPILAFXISG, MFALVFVVFDVETVFLYPWAM, and VLGVSVFIEALIFVLILIVGL.

The protein belongs to the complex I subunit 3 family. As to quaternary structure, NDH is composed of at least 16 different subunits, 5 of which are encoded in the nucleus.

The protein resides in the plastid. It is found in the chloroplast thylakoid membrane. The enzyme catalyses a plastoquinone + NADH + (n+1) H(+)(in) = a plastoquinol + NAD(+) + n H(+)(out). It catalyses the reaction a plastoquinone + NADPH + (n+1) H(+)(in) = a plastoquinol + NADP(+) + n H(+)(out). In terms of biological role, NDH shuttles electrons from NAD(P)H:plastoquinone, via FMN and iron-sulfur (Fe-S) centers, to quinones in the photosynthetic chain and possibly in a chloroplast respiratory chain. The immediate electron acceptor for the enzyme in this species is believed to be plastoquinone. Couples the redox reaction to proton translocation, and thus conserves the redox energy in a proton gradient. The polypeptide is NAD(P)H-quinone oxidoreductase subunit 3, chloroplastic (Eucalyptus globulus subsp. globulus (Tasmanian blue gum)).